Here is a 506-residue protein sequence, read N- to C-terminus: Ribose import ATP-binding protein RbsA (506 aa).

2 consecutive ABC transporter domains span residues 5–241 and 254–498; these read LALT…VGRR and RDAA…TSDV. 37 to 44 is a binding site for ATP; it reads GENGAGKS.

This sequence belongs to the ABC transporter superfamily. Ribose importer (TC 3.A.1.2.1) family. The complex is composed of an ATP-binding protein (RbsA), two transmembrane proteins (RbsC) and a solute-binding protein (RbsB).

The protein localises to the cell inner membrane. The catalysed reaction is D-ribose(out) + ATP + H2O = D-ribose(in) + ADP + phosphate + H(+). Functionally, part of the ABC transporter complex RbsABC involved in ribose import. Responsible for energy coupling to the transport system. The chain is Ribose import ATP-binding protein RbsA from Burkholderia mallei (strain ATCC 23344).